The primary structure comprises 189 residues: Marginal zone B- and B1-cell-specific protein (189 aa).

Residues Met1 to Gly22 form the signal peptide. 3 disulfide bridges follow: Cys50–Cys178, Cys53–Cys171, and Cys95–Cys143. A Prevents secretion from ER motif is present at residues Arg186–Leu189.

This sequence belongs to the MZB1 family. Part of the ER chaperone complex, a multi-protein complex in the endoplasmic reticulum containing a large number of molecular chaperones which associates with unassembled incompletely folded immunoglobulin heavy chains. Isoform 2 interacts with CASP2 and CASP9. Interacts with HSP90B1 and PDIA3 in a calcium-dependent manner. In terms of processing, forms an interchain disulfide bond with IgM monomers. As to expression, widely expressed with highest levels in adult brain, small intestine and lymphoid tissues such as thymus and spleen. Expression is frequently lower in intestinal-type gastric cancer. In obese patients, more abundant in omental than in subcutaneous fat.

The protein resides in the endoplasmic reticulum lumen. The protein localises to the secreted. It is found in the cytoplasm. Associates with immunoglobulin M (IgM) heavy and light chains and promotes IgM assembly and secretion. May exert its effect by acting as a molecular chaperone or as an oxidoreductase as it displays a low level of oxidoreductase activity. Isoform 2 may be involved in regulation of apoptosis. Helps to diversify peripheral B-cell functions by regulating Ca(2+) stores, antibody secretion and integrin activation. Functionally, acts as a hormone-regulated adipokine/pro-inflammatory cytokine that is implicated in causing chronic inflammation, affecting cellular expansion and blunting insulin response in adipocytes. May have a role in the onset of insulin resistance. The protein is Marginal zone B- and B1-cell-specific protein (MZB1) of Homo sapiens (Human).